A 688-amino-acid chain; its full sequence is Glycine--tRNA ligase beta subunit (688 aa).

This sequence belongs to the class-II aminoacyl-tRNA synthetase family. As to quaternary structure, tetramer of two alpha and two beta subunits.

The protein localises to the cytoplasm. It catalyses the reaction tRNA(Gly) + glycine + ATP = glycyl-tRNA(Gly) + AMP + diphosphate. In Histophilus somni (strain 129Pt) (Haemophilus somnus), this protein is Glycine--tRNA ligase beta subunit.